The chain runs to 493 residues: Glutamyl-tRNA(Gln) amidotransferase subunit A (493 aa).

Residues Lys79 and Ser159 each act as charge relay system in the active site. Catalysis depends on Ser183, which acts as the Acyl-ester intermediate.

This sequence belongs to the amidase family. GatA subfamily. In terms of assembly, heterotrimer of A, B and C subunits.

The catalysed reaction is L-glutamyl-tRNA(Gln) + L-glutamine + ATP + H2O = L-glutaminyl-tRNA(Gln) + L-glutamate + ADP + phosphate + H(+). Functionally, allows the formation of correctly charged Gln-tRNA(Gln) through the transamidation of misacylated Glu-tRNA(Gln) in organisms which lack glutaminyl-tRNA synthetase. The reaction takes place in the presence of glutamine and ATP through an activated gamma-phospho-Glu-tRNA(Gln). This is Glutamyl-tRNA(Gln) amidotransferase subunit A from Rhizobium meliloti (strain 1021) (Ensifer meliloti).